The primary structure comprises 509 residues: Subtelomeric hrmA-associated cluster protein AFUA_5G14880 (509 aa).

Part of the subtelomeric hrmA-associated cluster (HAC) containing genes that alter the hyphal surface (such as reduced total chitin or increased beta-glucan exposure) and perturb inter-hyphal interactions within the developing biofilms, resulting in a loss of vertically aligned polarized growing filaments. Consequently, this hypoxia-typic morphotype (called H-MORPH) with altered biofilm architecture leads to increased hypoxia fitness, increased host inflammation, rapid disease progression, and mortality in a murine model of invasive aspergillosis. This chain is Subtelomeric hrmA-associated cluster protein AFUA_5G14880, found in Aspergillus fumigatus (strain ATCC MYA-4609 / CBS 101355 / FGSC A1100 / Af293) (Neosartorya fumigata).